We begin with the raw amino-acid sequence, 965 residues long: Chondroitin synthase (965 aa).

A galactosaminyltransferase; A1 domain region spans residues 132-418; that stretch reads FTWYKNRKKS…IVKEKVPYIY (287 aa). Residues Pro158, Arg162, Asp189, Tyr218, Arg224, and 240 to 241 contribute to the UDP-N-acetyl-alpha-D-galactosamine site; that span reads DC. Residue Asp242 coordinates Mn(2+). Position 362 to 363 (362 to 363) interacts with UDP-N-acetyl-alpha-D-galactosamine; that stretch reads ED. His387 contacts Mn(2+). A glucuronosyltransferase; A2 domain region spans residues 419 to 683; it reads RKLLPIEDSH…ESRKYIFNKT (265 aa). UDP-alpha-D-glucuronate-binding positions include Tyr442, Asp470, and 518 to 521; that span reads QLDS. Residue Asp522 participates in Mn(2+) binding. Residues His582 and 604 to 605 each bind UDP-alpha-D-glucuronate; that span reads AV. His632 serves as a coordination point for Mn(2+).

Belongs to the glycosyltransferase 2 family. CS/HAS subfamily. Mn(2+) is required as a cofactor.

It is found in the cell membrane. It carries out the reaction 3-O-(beta-D-GlcA-(1-&gt;3)-beta-D-GalNAc-(1-&gt;4)-beta-D-GlcA-(1-&gt;3)-beta-D-Gal-(1-&gt;3)-beta-D-Gal-(1-&gt;4)-beta-D-Xyl)-L-seryl-[protein] + UDP-N-acetyl-alpha-D-galactosamine = 3-O-(beta-D-GalNAc-(1-&gt;4)-beta-D-GlcA-(1-&gt;3)-beta-D-GalNAc-(1-&gt;4)-beta-D-GlcA-(1-&gt;3)-beta-D-Gal-(1-&gt;3)-beta-D-Gal-(1-&gt;4)-beta-D-Xyl)-L-seryl-[protein] + UDP + H(+). The enzyme catalyses 3-O-{beta-D-GlcA-(1-&gt;3)-[beta-D-GalNAc-(1-&gt;4)-beta-D-GlcA-(1-&gt;3)](n)-beta-D-GalNAc-(1-&gt;4)-beta-D-GlcA-(1-&gt;3)-beta-D-Gal-(1-&gt;3)-beta-D-Gal-(1-&gt;4)-beta-D-Xyl}-L-seryl-[protein] + UDP-N-acetyl-alpha-D-galactosamine = 3-O-{[beta-D-GalNAc-(1-&gt;4)-beta-D-GlcA-(1-&gt;3)](n+1)-beta-D-GalNAc-(1-&gt;4)-beta-D-GlcA-(1-&gt;3)-beta-D-Gal-(1-&gt;3)-beta-D-Gal-(1-&gt;4)-beta-D-Xyl}-L-seryl-[protein] + UDP + H(+). It catalyses the reaction 3-O-(beta-D-GalNAc-(1-&gt;4)-beta-D-GlcA-(1-&gt;3)-beta-D-Gal-(1-&gt;3)-beta-D-Gal-(1-&gt;4)-beta-D-Xyl)-L-seryl-[protein] + UDP-alpha-D-glucuronate = 3-O-(beta-D-GlcA-(1-&gt;3)-beta-D-GalNAc-(1-&gt;4)-beta-D-GlcA-(1-&gt;3)-beta-D-Gal-(1-&gt;3)-beta-D-Gal-(1-&gt;4)-beta-D-Xyl)-L-seryl-[protein] + UDP + H(+). The catalysed reaction is 3-O-{[beta-D-GalNAc-(1-&gt;4)-beta-D-GlcA-(1-&gt;3)](n)-beta-D-GalNAc-(1-&gt;4)-beta-D-GlcA-(1-&gt;3)-beta-D-Gal-(1-&gt;3)-beta-D-Gal-(1-&gt;4)-beta-D-Xyl}-L-seryl-[protein] + UDP-alpha-D-glucuronate = 3-O-{beta-D-GlcA-(1-&gt;3)-[beta-D-GalNAc-(1-&gt;4)-beta-D-GlcA-(1-&gt;3)](n)-beta-D-GalNAc-(1-&gt;4)-beta-D-GlcA-(1-&gt;3)-beta-D-Gal-(1-&gt;3)-beta-D-Gal-(1-&gt;4)-beta-D-Xyl}-L-seryl-[protein] + UDP + H(+). Functionally, glycosyltransferase that catalyzes elongation of chondroitin, a polysaccharide composed of a repeating disaccharide of N-acetylgalactosamine (GalNAc) and glucuronic acid (GlcUA) units, by alternatively transferring the GlcUA and GalNAc moiety from UDP-GlcUA and UDP-GalNAc to the non-reducing ends of the chondroitin chain. Each chondroitin unit has the composition beta-(1-&gt;4)-GlcUA-beta-(1-&gt;3)-GalNAc. In Pasteurella multocida (strain Pm70), this protein is Chondroitin synthase (fcbD).